The primary structure comprises 640 residues: Threonine--tRNA ligase (640 aa).

In terms of domain architecture, TGS spans Met1–Thr59. The interval Asp240 to Pro531 is catalytic. The Zn(2+) site is built by Cys332, His383, and His508.

The protein belongs to the class-II aminoacyl-tRNA synthetase family. As to quaternary structure, homodimer. It depends on Zn(2+) as a cofactor.

The protein resides in the cytoplasm. It catalyses the reaction tRNA(Thr) + L-threonine + ATP = L-threonyl-tRNA(Thr) + AMP + diphosphate + H(+). Functionally, catalyzes the attachment of threonine to tRNA(Thr) in a two-step reaction: L-threonine is first activated by ATP to form Thr-AMP and then transferred to the acceptor end of tRNA(Thr). Also edits incorrectly charged L-seryl-tRNA(Thr). The protein is Threonine--tRNA ligase of Thermotoga sp. (strain RQ2).